We begin with the raw amino-acid sequence, 920 residues long: Vacuolar membrane protease (920 aa).

Over 1–20 (MASSRAQRFNPIAFTPWPVT) the chain is Cytoplasmic. The helical transmembrane segment at 21 to 41 (CITTIVYLALLIPILVINLVV) threads the bilayer. Residues 42-378 (PSAPETNPKG…AFAVFRLHTL (337 aa)) lie on the Vacuolar side of the membrane. N-linked (GlcNAc...) asparagine glycans are attached at residues Asn53, Asn116, and Asn119. The Zn(2+) site is built by His175 and Asp187. Glu221 functions as the Proton acceptor in the catalytic mechanism. Zn(2+) is bound at residue Glu222. An N-linked (GlcNAc...) asparagine glycan is attached at Asn238. Glu247 and His306 together coordinate Zn(2+). The chain crosses the membrane as a helical span at residues 379–399 (FAISVALLVIAPLVIFITSVI). Residues 400–433 (LSKTDRMYLFSMSKSLEGTGDQVSLRGLRGFSRT) lie on the Cytoplasmic side of the membrane. Residues 434 to 454 (PIILVIATTIPICLAYLLEKV) form a helical membrane-spanning segment. Topologically, residues 455–463 (NPYIVHSSQ) are vacuolar. Residues 464 to 484 (FSVWSMMFSAWIFLAWFLACA) form a helical membrane-spanning segment. Over 485 to 495 (ADFFRPSALHR) the chain is Cytoplasmic. A helical transmembrane segment spans residues 496–516 (AYSYTWIFVATWIMLVINTVY). The Vacuolar portion of the chain corresponds to 517–520 (ANQK). The chain crosses the membrane as a helical span at residues 521–541 (GIAAGYFLLFYFAGAFLATWI). Over 542–659 (SYLELFALPR…TLPRWTWVLQ (118 aa)) the chain is Cytoplasmic. The disordered stretch occupies residues 556 to 605 (ARQTTGRRPSSLSSRLLTSSADELRSNASPSTAEFPGAAGEDTDPTESTS). The span at 559–575 (TTGRRPSSLSSRLLTSS) shows a compositional bias: low complexity. Residues 660–680 (LLLLAPIVLILVGQLALFLTA) form a helical membrane-spanning segment. Residues 681–693 (SMCQVGSDGVSTF) are Vacuolar-facing. Residues 694-714 (VVYLACAVFTTLLCIPLFPLI) traverse the membrane as a helical segment. Residues 715 to 720 (HRFTYH) are Cytoplasmic-facing. A helical transmembrane segment spans residues 721–741 (IPTFLFLVFIGTLIYNLVAFP). The Vacuolar portion of the chain corresponds to 742–920 (FSPANRLKTF…VEASHSFTIQ (179 aa)). N-linked (GlcNAc...) asparagine glycosylation is found at Asn760, Asn788, and Asn832.

The protein belongs to the peptidase M28 family. The cofactor is Zn(2+).

It localises to the vacuole membrane. In terms of biological role, may be involved in vacuolar sorting and osmoregulation. The protein is Vacuolar membrane protease of Ajellomyces capsulatus (strain H143) (Darling's disease fungus).